The chain runs to 312 residues: Beta-ketoacyl-[acyl-carrier-protein] synthase III (312 aa).

Residues Cys112 and His237 contribute to the active site. Residues 238 to 242 (QANIR) form an ACP-binding region. The active site involves Asn267.

This sequence belongs to the thiolase-like superfamily. FabH family. Homodimer.

Its subcellular location is the cytoplasm. The catalysed reaction is malonyl-[ACP] + acetyl-CoA + H(+) = 3-oxobutanoyl-[ACP] + CO2 + CoA. The protein operates within lipid metabolism; fatty acid biosynthesis. Catalyzes the condensation reaction of fatty acid synthesis by the addition to an acyl acceptor of two carbons from malonyl-ACP. Catalyzes the first condensation reaction which initiates fatty acid synthesis and may therefore play a role in governing the total rate of fatty acid production. Possesses both acetoacetyl-ACP synthase and acetyl transacylase activities. Its substrate specificity determines the biosynthesis of branched-chain and/or straight-chain of fatty acids. This chain is Beta-ketoacyl-[acyl-carrier-protein] synthase III, found in Listeria welshimeri serovar 6b (strain ATCC 35897 / DSM 20650 / CCUG 15529 / CIP 8149 / NCTC 11857 / SLCC 5334 / V8).